The following is a 389-amino-acid chain: Urea transporter 1 (389 aa).

5 helical membrane-spanning segments follow: residues 53 to 73 (PVVLQFIDWILRGISQVVFVN), 91 to 110 (WWALTGWLGTVVSTLMALLL), 116 to 136 (LIASGLYGYNATLVGVLMAVF), 143 to 163 (FWWLLLPVCAMSMTCPIFSSA), and 173 to 193 (LPVFTLPFNMALSMYLSATGH). Residue Asn211 is glycosylated (N-linked (GlcNAc...) asparagine). 4 helical membrane passes run 242-262 (GGIFLGAILLSSPLMCLHAAI), 281-301 (IYFGLWGFNSSLACIAMGGMF), 310-330 (LLALGCALFTAYLGVGMANFM), and 333-353 (VGLPACTWPFCLATLLFLIMT).

Belongs to the urea transporter family. In terms of assembly, homotrimer; each subunit contains a pore through which urea permeates. Identified in a complex with STOM. As to expression, detected in erythrocytes (at protein level). Expressed in spleen erythroblasts and tumoral kidney.

It localises to the cell membrane. The protein localises to the basolateral cell membrane. The catalysed reaction is urea(in) = urea(out). Inhibited by phloretin and para-chloromercuribenzene sulfonate. Mediates the transport of urea driven by a concentration gradient across the cell membrane of erythrocytes. Also mediates the transport of urea across the cell membrane of the renal inner medullary collecting duct which is critical to the urinary concentrating mechanism. Facilitates water transport in erythrocytes. In Homo sapiens (Human), this protein is Urea transporter 1 (SLC14A1).